A 408-amino-acid chain; its full sequence is LL-diaminopimelate aminotransferase (408 aa).

Substrate-binding residues include Tyr15 and Gly42. Pyridoxal 5'-phosphate contacts are provided by residues Tyr72, 108–109, Tyr132, Asn187, Tyr218, and 246–248; these read SK and SFS. Substrate is bound by residues Lys109, Tyr132, and Asn187. An N6-(pyridoxal phosphate)lysine modification is found at Lys249. Residues Arg257 and Asn292 each coordinate pyridoxal 5'-phosphate. Positions 292 and 388 each coordinate substrate.

Belongs to the class-I pyridoxal-phosphate-dependent aminotransferase family. LL-diaminopimelate aminotransferase subfamily. In terms of assembly, homodimer. Pyridoxal 5'-phosphate is required as a cofactor.

The enzyme catalyses (2S,6S)-2,6-diaminopimelate + 2-oxoglutarate = (S)-2,3,4,5-tetrahydrodipicolinate + L-glutamate + H2O + H(+). Its pathway is amino-acid biosynthesis; L-lysine biosynthesis via DAP pathway; LL-2,6-diaminopimelate from (S)-tetrahydrodipicolinate (aminotransferase route): step 1/1. Involved in the synthesis of meso-diaminopimelate (m-DAP or DL-DAP), required for both lysine and peptidoglycan biosynthesis. Catalyzes the direct conversion of tetrahydrodipicolinate to LL-diaminopimelate. The protein is LL-diaminopimelate aminotransferase of Leptospira biflexa serovar Patoc (strain Patoc 1 / Ames).